An 81-amino-acid chain; its full sequence is Large ribosomal subunit protein bL31B (81 aa).

The protein belongs to the bacterial ribosomal protein bL31 family. Type B subfamily. In terms of assembly, part of the 50S ribosomal subunit.

In Borreliella burgdorferi (strain ZS7) (Borrelia burgdorferi), this protein is Large ribosomal subunit protein bL31B.